A 318-amino-acid polypeptide reads, in one-letter code: UDP-N-acetylenolpyruvoylglucosamine reductase (318 aa).

The FAD-binding PCMH-type domain occupies 38 to 204 (IGGVCPVIVE…LGIEILLKEG (167 aa)). Arginine 182 is a catalytic residue. The span at 212-229 (SLKDKRDRRNSSQPENKK) shows a compositional bias: basic and acidic residues. Residues 212-232 (SLKDKRDRRNSSQPENKKSAG) are disordered. Serine 233 functions as the Proton donor in the catalytic mechanism. Glutamate 310 is an active-site residue.

This sequence belongs to the MurB family. FAD serves as cofactor.

It is found in the cytoplasm. The enzyme catalyses UDP-N-acetyl-alpha-D-muramate + NADP(+) = UDP-N-acetyl-3-O-(1-carboxyvinyl)-alpha-D-glucosamine + NADPH + H(+). Its pathway is cell wall biogenesis; peptidoglycan biosynthesis. Functionally, cell wall formation. The polypeptide is UDP-N-acetylenolpyruvoylglucosamine reductase (Leptospira interrogans serogroup Icterohaemorrhagiae serovar Lai (strain 56601)).